The sequence spans 403 residues: MDDRNEIPQDGPASMEPEGVIESTWHEVYDNFDDMNLREELLRGIYGYGFEKPSAIQQRAIIPCVRGRDVIAQAQSGTGKTATFSIAILQQIDTSIRECQALILAPTRELATQIQRVVMALGEYMKVHSHACIGGTNVREDARILESGCHVVVGTPGRVYDMINRKVLRTQYIKLFVLDEADEMLSRGFKDQIQDVFKMLPPDVQVILLSATMPPDVLEVSRCFMRDPVSILVKKEELTLEGIKQFYVNVKQENWKLGTLCDLYDTLSITQSVIFCNTRRKVDQLTQEMSIHNFTVSAMHGDMEQRDREVIMKQFRSGSSRVLITTDLLARGIDVQQVSLVINYDLPSNRENYIHRIGRGGRFGRKGVAINFITDDDRRILKDIEQFYHTTIEEMPANIADLI.

Residues 1–20 (MDDRNEIPQDGPASMEPEGV) are disordered. The Q motif signature appears at 30-58 (DNFDDMNLREELLRGIYGYGFEKPSAIQQ). Residues 61–231 (IIPCVRGRDV…RCFMRDPVSI (171 aa)) form the Helicase ATP-binding domain. Residue 74-81 (AQSGTGKT) coordinates ATP. Residues 179–182 (DEAD) carry the DEAD box motif. Residues 242–403 (GIKQFYVNVK…EMPANIADLI (162 aa)) form the Helicase C-terminal domain.

This sequence belongs to the DEAD box helicase family. eIF4A subfamily. In terms of assembly, eIF4F is a multi-subunit complex, the composition of which varies with external and internal environmental conditions. It is composed of at least eIF4A, eIF4E1 and eIF4G1. Interacts with tud and vas. Interacts (via multiple contacts) with bam; the interaction is direct.

It localises to the cytoplasm. The protein resides in the cytoplasmic ribonucleoprotein granule. The catalysed reaction is ATP + H2O = ADP + phosphate + H(+). Its function is as follows. ATP-dependent RNA helicase which is a subunit of the eIF4F complex involved in cap recognition and is required for mRNA binding to ribosome. In the current model of translation initiation, eIF4A unwinds RNA secondary structures in the 5'-UTR of mRNAs which is necessary to allow efficient binding of the small ribosomal subunit, and subsequent scanning for the initiator codon. As a result, promotes cell proliferation and growth. Binds and antagonises the bam-bgcn complex; probably prevents bam mediated translational repression of shg/E-cadherin. Involved in germ cell formation. Involved in germline stem cell maintenance and proliferation; prevents differentiation. This chain is Eukaryotic initiation factor 4A, found in Drosophila melanogaster (Fruit fly).